The primary structure comprises 1377 residues: Dicer-like protein 2 (1377 aa).

In terms of domain architecture, Helicase ATP-binding spans 23 to 203 (MFEASLKENI…MKTLESNLDS (181 aa)). Residue 36 to 43 (MDTGTGKT) coordinates ATP. The DEAH box signature appears at 144–147 (DEAH). The 164-residue stretch at 368-531 (ALINFLDKFD…AYQDEERRLR (164 aa)) folds into the Helicase C-terminal domain. Residues 561-655 (VVTHLYHFCA…LPLTKNPEMR (95 aa)) form the Dicer dsRNA-binding fold domain. RNase III domains follow at residues 914–1052 (RLCA…LDGG) and 1092–1275 (DGDL…VDSG). Residues glutamate 1131, aspartate 1261, and glutamate 1264 each contribute to the Mg(2+) site.

The protein belongs to the helicase family. Dicer subfamily. It depends on Mg(2+) as a cofactor. The cofactor is Mn(2+).

Dicer-like endonuclease involved in cleaving double-stranded RNA in the RNA interference (RNAi) pathway. Produces 21 to 25 bp dsRNAs (siRNAs) which target the selective destruction of homologous RNAs leading to sequence-specific suppression of gene expression, called post-transcriptional gene silencing (PTGS). Part of a broad host defense response against viral infection and transposons. The sequence is that of Dicer-like protein 2 (dcl2) from Aspergillus oryzae (strain ATCC 42149 / RIB 40) (Yellow koji mold).